The following is a 384-amino-acid chain: MSWQEKINAALDARRAADALRRRYPVAQGAGRWLVADDRQYLNFSSNDYLGLSHHPQIIRAWQQGAEQFGVGSGGSGHVSGYSVAHQALEEELAEWLGYSRALLFISGFAANQAVIAAMMAKEDRIAADRLSHASLLEAASLSPSQLRRFAHNDVTHLARLLASPCPGQQMVVTEGVFSMDGDSAPLAEIQQVTQQHNGWLMVDDAHGTGVIGEQGRGSCWLQKVKPELLVVTFGKGFGVSGAAVLCSSTVADYLLQFARHLIYSTSMPPAQAQALRASLAVIRSEEGDARREKLAALITRFRAGVQGSPFTLADSRSAIQPLIVGDNSRALQLAEKLRQQGCWVTAIRPPTVPAGTARLRLTLTAAHEMQDIDRLLEMLHGNG.

A substrate-binding site is contributed by Arg21. 108 to 109 (GF) is a pyridoxal 5'-phosphate binding site. His133 provides a ligand contact to substrate. Pyridoxal 5'-phosphate-binding residues include Ser179, His207, and Thr233. Lys236 carries the N6-(pyridoxal phosphate)lysine modification. Thr352 serves as a coordination point for substrate.

It belongs to the class-II pyridoxal-phosphate-dependent aminotransferase family. BioF subfamily. As to quaternary structure, homodimer. Requires pyridoxal 5'-phosphate as cofactor.

It carries out the reaction 6-carboxyhexanoyl-[ACP] + L-alanine + H(+) = (8S)-8-amino-7-oxononanoate + holo-[ACP] + CO2. The protein operates within cofactor biosynthesis; biotin biosynthesis. In terms of biological role, catalyzes the decarboxylative condensation of pimeloyl-[acyl-carrier protein] and L-alanine to produce 8-amino-7-oxononanoate (AON), [acyl-carrier protein], and carbon dioxide. This is 8-amino-7-oxononanoate synthase from Escherichia coli O8 (strain IAI1).